A 229-amino-acid chain; its full sequence is Aminopyrimidine aminohydrolase (229 aa).

Asp-44 is a substrate binding site. Residue Cys-137 is the Nucleophile of the active site. Substrate contacts are provided by Tyr-141 and Tyr-167. Glu-208 serves as the catalytic Proton donor.

The protein belongs to the TenA family. Homotetramer.

It carries out the reaction 4-amino-5-aminomethyl-2-methylpyrimidine + H2O = 4-amino-5-hydroxymethyl-2-methylpyrimidine + NH4(+). The enzyme catalyses thiamine + H2O = 5-(2-hydroxyethyl)-4-methylthiazole + 4-amino-5-hydroxymethyl-2-methylpyrimidine + H(+). It participates in cofactor biosynthesis; thiamine diphosphate biosynthesis. Its function is as follows. Catalyzes an amino-pyrimidine hydrolysis reaction at the C5' of the pyrimidine moiety of thiamine compounds, a reaction that is part of a thiamine salvage pathway. Thus, catalyzes the conversion of 4-amino-5-aminomethyl-2-methylpyrimidine to 4-amino-5-hydroxymethyl-2-methylpyrimidine (HMP). Is also able to catalyze the hydrolytic cleavage of thiamine; however, this thiaminase activity may not be physiologically relevant. Therefore, is probably involved in the regeneration of the thiamine pyrimidine from thiamine degraded products present in the environment, rather than in thiamine degradation. The sequence is that of Aminopyrimidine aminohydrolase from Staphylococcus aureus (strain MRSA252).